Reading from the N-terminus, the 236-residue chain is 2-C-methyl-D-erythritol 4-phosphate cytidylyltransferase (236 aa).

Belongs to the IspD/TarI cytidylyltransferase family. IspD subfamily. As to quaternary structure, homodimer.

The catalysed reaction is 2-C-methyl-D-erythritol 4-phosphate + CTP + H(+) = 4-CDP-2-C-methyl-D-erythritol + diphosphate. Its pathway is isoprenoid biosynthesis; isopentenyl diphosphate biosynthesis via DXP pathway; isopentenyl diphosphate from 1-deoxy-D-xylulose 5-phosphate: step 2/6. Its function is as follows. Catalyzes the formation of 4-diphosphocytidyl-2-C-methyl-D-erythritol from CTP and 2-C-methyl-D-erythritol 4-phosphate (MEP). This chain is 2-C-methyl-D-erythritol 4-phosphate cytidylyltransferase, found in Klebsiella pneumoniae subsp. pneumoniae (strain ATCC 700721 / MGH 78578).